Reading from the N-terminus, the 385-residue chain is Heat-inducible transcription repressor HrcA (385 aa).

This sequence belongs to the HrcA family.

Functionally, negative regulator of class I heat shock genes (grpE-dnaK-dnaJ and groELS operons). Prevents heat-shock induction of these operons. In Protochlamydia amoebophila (strain UWE25), this protein is Heat-inducible transcription repressor HrcA.